Reading from the N-terminus, the 475-residue chain is MEANKKAKPSYGDVISNLPNDLLCRILSYLSTKEAALTSILSKRWSNLLLSIPILDFDDSVLLKPQKGQRKNVFFKAFVDRLLSQRVETSSHVQRVSLKCRQGGVEPDCVIKWILTTVRDLGVLDLSLCIDFGIFHLPFNVFRSKTLVKLRIGTMIRLSQFPSDVVSPTLNSLVLDLVEFRDGDKVEFRQILLAFPSLQSLRVHESNKWKFWNGSASSRTLKSLVYRSDDDSSAPKPCVSFDTPSLVYLDYSDMVADKYENLKFDSLVEARLDLHLTAFQIMRKPNNIGIVSGDVTTLFKGIRNVKILCLSPDALEALYYRGEKIPMFNNLITLSLGSDKPHGSPFIFWKLLPSLLNNSLKLETLIIKGLVHYVAEGWEGLSPMTPMSRLCFSWDTVSDSLSSSAMKVLEISGYKGTWQELNQMKRFLGNLSRLEVVRVYHKAMDDKERINVMFDLFLLPKVSSECDIQVMKETA.

An F-box domain is found at Gly12–Asp58.

This chain is F-box protein At3g59150, found in Arabidopsis thaliana (Mouse-ear cress).